Here is a 401-residue protein sequence, read N- to C-terminus: Tyrosine--tRNA ligase (401 aa).

The short motif at 42 to 51 (PTAPDLHLGH) is the 'HIGH' region element. Positions 226–230 (KMSKS) match the 'KMSKS' region motif. K229 contacts ATP. The 62-residue stretch at 336–397 (IALAQLLKQI…GKRRIAKLSI (62 aa)) folds into the S4 RNA-binding domain.

This sequence belongs to the class-I aminoacyl-tRNA synthetase family. TyrS type 2 subfamily. Homodimer.

Its subcellular location is the cytoplasm. The catalysed reaction is tRNA(Tyr) + L-tyrosine + ATP = L-tyrosyl-tRNA(Tyr) + AMP + diphosphate + H(+). Catalyzes the attachment of tyrosine to tRNA(Tyr) in a two-step reaction: tyrosine is first activated by ATP to form Tyr-AMP and then transferred to the acceptor end of tRNA(Tyr). The polypeptide is Tyrosine--tRNA ligase (Legionella pneumophila (strain Lens)).